The following is a 1403-amino-acid chain: Sushi, nidogen and EGF-like domain-containing protein 1 (1403 aa).

The N-terminal stretch at 1 to 24 (MRRGAAWALLLAAALGLGARGVRA) is a signal peptide. The 156-residue stretch at 103-258 (AFWADVDNRR…GRWAFRIDDA (156 aa)) folds into the NIDO domain. 3 EGF-like domains span residues 268–309 (TTSV…RRCH), 311–347 (DVNE…PTCE), and 349–385 (AQSP…ATCE). Intrachain disulfides connect Cys272/Cys284, Cys278/Cys297, Cys299/Cys308, Cys315/Cys326, Cys320/Cys335, Cys337/Cys346, Cys353/Cys364, Cys358/Cys373, Cys375/Cys384, Cys391/Cys402, Cys396/Cys411, Cys413/Cys422, Cys433/Cys444, Cys438/Cys453, Cys455/Cys464, Cys472/Cys480, Cys474/Cys488, and Cys490/Cys499. An N-linked (GlcNAc...) asparagine glycan is attached at Asn292. The EGF-like 4; calcium-binding domain maps to 387 to 423 (DVDECSSDPCLNGGSCVDLVGNYSCICVEPFEGPQCE). An N-linked (GlcNAc...) asparagine glycan is attached at Asn408. EGF-like domains follow at residues 429 to 465 (VPSP…LDCR) and 468 to 500 (ILND…LLCE). A glycan (N-linked (GlcNAc...) asparagine) is linked at Asn484. A glycan (N-linked (GlcNAc...) asparagine) is linked at Asn536. EGF-like domains are found at residues 541-577 (LPSP…RHCE), 580-616 (RPHL…RHCE), 619-655 (KPDS…RHCE), and 657-693 (APSP…HRCQ). Disulfide bonds link Cys545/Cys556, Cys550/Cys565, Cys567/Cys576, Cys584/Cys595, Cys589/Cys604, Cys606/Cys615, Cys623/Cys634, Cys628/Cys643, Cys645/Cys654, Cys661/Cys672, Cys666/Cys681, Cys683/Cys692, Cys698/Cys739, Cys724/Cys751, Cys757/Cys768, Cys762/Cys777, Cys779/Cys788, Cys795/Cys806, Cys800/Cys815, Cys817/Cys826, Cys833/Cys844, Cys838/Cys853, Cys855/Cys864, Cys871/Cys882, Cys876/Cys891, and Cys893/Cys902. The Sushi domain occupies 696-753 (VDCGQPEEVKHATMRLNGTRMGSVALYTCDPGFSLSVLSHMRVCQPQGVWSQPPQCIE). Asn712 is a glycosylation site (N-linked (GlcNAc...) asparagine). In terms of domain architecture, EGF-like 11; calcium-binding spans 753–789 (EVDECQSQPCLHKGSCQDLIAGYQCLCSPGYEGVHCE). Residues 791 to 827 (ETDECQAQPCRNGGSCRDLPGAFICQCPEGFVGTHCE) enclose the EGF-like 12; calcium-binding domain. 2 EGF-like domains span residues 829-865 (EVDA…YNCE) and 867-903 (VSDP…KDCT). N-linked (GlcNAc...) asparagine glycosylation occurs at Asn886. Fibronectin type-III domains are found at residues 908–1006 (PPTA…TRPR), 1007–1105 (PIED…TRPL), and 1106–1200 (PPAN…SPRD). Asn977, Asn1015, Asn1109, Asn1139, and Asn1298 each carry an N-linked (GlcNAc...) asparagine glycan. Residues 1295 to 1314 (LPKNNSKDTESTPGSCSEDT) are disordered. Residues 1305–1314 (STPGSCSEDT) are compositionally biased toward polar residues. The EGF-like 15 domain maps to 1306 to 1342 (TPGSCSEDTCQNGGTCVPGANAHSCDCRPGFKGRHCE). Disulfide bonds link Cys1310–Cys1321, Cys1315–Cys1330, and Cys1332–Cys1341.

Post-translationally, phosphorylated on serine and threonine residues. In terms of processing, N-glycosylated. In terms of tissue distribution, expressed in liver.

The protein localises to the secreted. Its subcellular location is the extracellular space. The protein resides in the extracellular matrix. This is Sushi, nidogen and EGF-like domain-containing protein 1 from Rattus norvegicus (Rat).